A 511-amino-acid polypeptide reads, in one-letter code: Pancreatic alpha-amylase (511 aa).

Residues 1–15 (MKLFLLLSAFGFCWA) form the signal peptide. Glutamine 16 carries the pyrrolidone carboxylic acid modification. 3 cysteine pairs are disulfide-bonded: cysteine 43–cysteine 101, cysteine 85–cysteine 130, and cysteine 156–cysteine 175. 3 residues coordinate Ca(2+): asparagine 115, arginine 173, and aspartate 182. Chloride is bound at residue arginine 210. Aspartate 212 serves as the catalytic Nucleophile. Histidine 216 contacts Ca(2+). Glutamate 248 functions as the Proton donor in the catalytic mechanism. Chloride is bound by residues asparagine 313 and arginine 352. Cysteine 393 and cysteine 399 are oxidised to a cystine. An N-linked (GlcNAc...) asparagine glycan is attached at asparagine 427. Cysteine 465 and cysteine 477 are disulfide-bonded.

The protein belongs to the glycosyl hydrolase 13 family. Binds to the sea anemone inhibitor helianthamide and magnificamide. The cofactor is Ca(2+). It depends on chloride as a cofactor.

The protein resides in the secreted. It is found in the extracellular space. The enzyme catalyses Endohydrolysis of (1-&gt;4)-alpha-D-glucosidic linkages in polysaccharides containing three or more (1-&gt;4)-alpha-linked D-glucose units.. The sequence is that of Pancreatic alpha-amylase (AMY2) from Sus scrofa (Pig).